Here is an 87-residue protein sequence, read N- to C-terminus: Omega-lycotoxin-Am1c (87 aa).

The first 17 residues, 1 to 17 (MKLSIFFVLFFIAIAYC), serve as a signal peptide directing secretion. Residues 18-40 (QPEFLDDEEDEVEETLPVAEEGR) constitute a propeptide that is removed on maturation. Disulfide bonds link Cys-44–Cys-59, Cys-51–Cys-64, Cys-58–Cys-84, and Cys-66–Cys-82.

The protein belongs to the neurotoxin omega-lctx family. Expressed by the venom gland.

The protein resides in the secreted. In terms of biological role, modulates Cav2.1/CACNA1A voltage-gated calcium channels (P/Q-type currents) in rat cerebellar Purkinje cells and hippocampal CA1-CA3 neurons. At saturating concentrations (&gt;10 nM) decelerates activation kinetics and slightly increases peak amplitude without affecting deactivation kinetics. In vivo, does not cause death when intravenously injected into mice. In rat models, through its activity on Cav2.1/CACNA1A, has an ameliorative effect on memory defects provoked by hyperstimulation of N-methyl-D-aspartate receptors (NMDARs) in the hippocampus. The chain is Omega-lycotoxin-Am1c from Alopecosa marikovskyi (Wolf spider).